The chain runs to 554 residues: MSEAEARPTNFIRQIIDEDLASGKHTTVHTRFPPEPNGYLHIGHAKSICLNFGIAQDYKGQCNLRFDDTNPVKEDIEYVESIKNDVEWLGFHWSGNVRYSSDYFDQLHAYAIELINKGLAYVDELTPEQIREYRGTLTQPGKNSPYRDRSVEENLALFEKMRAGGFEEGKACLRAKIDMASPFIVMRDPVLYRIKFAEHHQTGNKWCIYPMYDFTHCISDALEGITHSLCTLEFQDNRRLYDWVLDNITISVHPRQYEFSRLNLEYTVMSKRKLNLLVTDKHVEGWDDPRMPTISGLRRRGYTAASIREFCKRIGVTKQDNTIEMASLESCIREDLNENAPRAMAVIDPVKLVIENYQGEGEMVTMPNHPNKPEMGSRQVPFSGEIWIDRADFREEANKQYKRLVLGKEVRLRNAYVIKAERVEKDAEGNITTIFCTYDADTLSKDPADGRKVKGVIHWVSAAHALPVEIRLYDRLFSVPNPGAADDFLSVINPESLVIKQGFAEPSLKDAVAGKAFQFEREGYFCLDSRHSTAEKPVFNRTVGLRDTWAKVGE.

The 'HIGH' region motif lies at 34-44 (PEPNGYLHIGH). ATP contacts are provided by residues 35–37 (EPN) and 41–47 (HIGHAKS). Positions 67 and 212 each coordinate L-glutamine. ATP-binding positions include Thr231, 261-262 (RL), and 269-271 (MSK). The short motif at 268 to 272 (VMSKR) is the 'KMSKS' region element. The tract at residues 317 to 324 (TKQDNTIE) is interaction with tRNA.

It belongs to the class-I aminoacyl-tRNA synthetase family. Monomer.

The protein localises to the cytoplasm. The enzyme catalyses tRNA(Gln) + L-glutamine + ATP = L-glutaminyl-tRNA(Gln) + AMP + diphosphate. This Shigella boydii serotype 18 (strain CDC 3083-94 / BS512) protein is Glutamine--tRNA ligase.